Here is a 236-residue protein sequence, read N- to C-terminus: UPF0502 protein BceJ2315_62050 (236 aa).

This sequence belongs to the UPF0502 family.

This Burkholderia cenocepacia (strain ATCC BAA-245 / DSM 16553 / LMG 16656 / NCTC 13227 / J2315 / CF5610) (Burkholderia cepacia (strain J2315)) protein is UPF0502 protein BceJ2315_62050.